We begin with the raw amino-acid sequence, 122 residues long: Large ribosomal subunit protein uL18 (122 aa).

Basic residues predominate over residues M1–I21. The disordered stretch occupies residues M1–S25.

The protein belongs to the universal ribosomal protein uL18 family. Part of the 50S ribosomal subunit; part of the 5S rRNA/L5/L18/L25 subcomplex. Contacts the 5S and 23S rRNAs.

Its function is as follows. This is one of the proteins that bind and probably mediate the attachment of the 5S RNA into the large ribosomal subunit, where it forms part of the central protuberance. The polypeptide is Large ribosomal subunit protein uL18 (Synechococcus sp. (strain CC9902)).